We begin with the raw amino-acid sequence, 244 residues long: L-xylulose reductase (244 aa).

M1 is modified (N-acetylmethionine). Residue 11-39 (LVTGAGKGIGRSTVLALKAAGAQVVAVSR) participates in NADP(+) binding. R21 bears the Omega-N-methylarginine mark. A substrate-binding site is contributed by S136. The active-site Proton acceptor is the Y149. The active site involves K153.

Belongs to the short-chain dehydrogenases/reductases (SDR) family. Homotetramer. As to expression, highly expressed in kidney and liver. Expressed in epididymis. Expressed at intermediate level in lung. Weakly expressed in brain, heart, spleen and testis.

The protein localises to the membrane. It carries out the reaction xylitol + NADP(+) = L-xylulose + NADPH + H(+). In terms of biological role, catalyzes the NADPH-dependent reduction of several pentoses, tetroses, trioses, alpha-dicarbonyl compounds and L-xylulose. Participates in the uronate cycle of glucose metabolism. May play a role in the water absorption and cellular osmoregulation in the proximal renal tubules by producing xylitol, an osmolyte, thereby preventing osmolytic stress from occurring in the renal tubules. This chain is L-xylulose reductase (DCXR), found in Cavia porcellus (Guinea pig).